Consider the following 212-residue polypeptide: Prolactin (212 aa).

A signal peptide spans 1-26; the sequence is MARCCKCPRLHLAVTVLACVLVFTEG. 2 disulfides stabilise this stretch: Cys-71-Cys-185 and Cys-202-Cys-212.

The protein belongs to the somatotropin/prolactin family. As to expression, pituitary gland.

The protein resides in the secreted. The chain is Prolactin (prl) from Ictalurus punctatus (Channel catfish).